A 177-amino-acid polypeptide reads, in one-letter code: Peptide deformylase (177 aa).

Positions 99 and 141 each coordinate Fe cation. The active site involves E142. Residue H145 participates in Fe cation binding.

This sequence belongs to the polypeptide deformylase family. Requires Fe(2+) as cofactor.

The enzyme catalyses N-terminal N-formyl-L-methionyl-[peptide] + H2O = N-terminal L-methionyl-[peptide] + formate. Removes the formyl group from the N-terminal Met of newly synthesized proteins. Requires at least a dipeptide for an efficient rate of reaction. N-terminal L-methionine is a prerequisite for activity but the enzyme has broad specificity at other positions. This Rhizorhabdus wittichii (strain DSM 6014 / CCUG 31198 / JCM 15750 / NBRC 105917 / EY 4224 / RW1) (Sphingomonas wittichii) protein is Peptide deformylase.